Consider the following 122-residue polypeptide: Large ribosomal subunit protein bL19 (122 aa).

The protein belongs to the bacterial ribosomal protein bL19 family.

This protein is located at the 30S-50S ribosomal subunit interface and may play a role in the structure and function of the aminoacyl-tRNA binding site. This is Large ribosomal subunit protein bL19 from Chlamydia abortus (strain DSM 27085 / S26/3) (Chlamydophila abortus).